A 101-amino-acid polypeptide reads, in one-letter code: Large ribosomal subunit protein uL23 (101 aa).

It belongs to the universal ribosomal protein uL23 family. Part of the 50S ribosomal subunit. Contacts protein L29, and trigger factor when it is bound to the ribosome.

Its function is as follows. One of the early assembly proteins it binds 23S rRNA. One of the proteins that surrounds the polypeptide exit tunnel on the outside of the ribosome. Forms the main docking site for trigger factor binding to the ribosome. This Pseudarthrobacter chlorophenolicus (strain ATCC 700700 / DSM 12829 / CIP 107037 / JCM 12360 / KCTC 9906 / NCIMB 13794 / A6) (Arthrobacter chlorophenolicus) protein is Large ribosomal subunit protein uL23.